The sequence spans 407 residues: Phosphopentomutase (407 aa).

Asp-10, Asp-306, His-311, Asp-347, His-348, and His-359 together coordinate Mn(2+).

This sequence belongs to the phosphopentomutase family. Mn(2+) serves as cofactor.

The protein localises to the cytoplasm. It catalyses the reaction 2-deoxy-alpha-D-ribose 1-phosphate = 2-deoxy-D-ribose 5-phosphate. The enzyme catalyses alpha-D-ribose 1-phosphate = D-ribose 5-phosphate. It functions in the pathway carbohydrate degradation; 2-deoxy-D-ribose 1-phosphate degradation; D-glyceraldehyde 3-phosphate and acetaldehyde from 2-deoxy-alpha-D-ribose 1-phosphate: step 1/2. Functionally, isomerase that catalyzes the conversion of deoxy-ribose 1-phosphate (dRib-1-P) and ribose 1-phosphate (Rib-1-P) to deoxy-ribose 5-phosphate (dRib-5-P) and ribose 5-phosphate (Rib-5-P), respectively. The chain is Phosphopentomutase from Buchnera aphidicola subsp. Acyrthosiphon pisum (strain Tuc7).